A 159-amino-acid chain; its full sequence is Sec-independent protein translocase protein TatB (159 aa).

Residues M1–G21 form a helical membrane-spanning segment.

Belongs to the TatB family. In terms of assembly, the Tat system comprises two distinct complexes: a TatABC complex, containing multiple copies of TatA, TatB and TatC subunits, and a separate TatA complex, containing only TatA subunits. Substrates initially bind to the TatABC complex, which probably triggers association of the separate TatA complex to form the active translocon.

The protein localises to the cell inner membrane. In terms of biological role, part of the twin-arginine translocation (Tat) system that transports large folded proteins containing a characteristic twin-arginine motif in their signal peptide across membranes. Together with TatC, TatB is part of a receptor directly interacting with Tat signal peptides. TatB may form an oligomeric binding site that transiently accommodates folded Tat precursor proteins before their translocation. This chain is Sec-independent protein translocase protein TatB, found in Acidovorax sp. (strain JS42).